Reading from the N-terminus, the 398-residue chain is S-adenosylmethionine synthase (398 aa).

His16 provides a ligand contact to ATP. Asp18 is a binding site for Mg(2+). Glu44 serves as a coordination point for K(+). The L-methionine site is built by Glu57 and Gln100. The segment at 100 to 110 (QSPDIAQGVNE) is flexible loop. Residues 175–177 (DAK), 242–243 (RF), Asp251, 257–258 (RK), Ala274, and Lys278 contribute to the ATP site. Asp251 provides a ligand contact to L-methionine. Lys282 contacts L-methionine.

The protein belongs to the AdoMet synthase family. As to quaternary structure, homotetramer; dimer of dimers. Mg(2+) is required as a cofactor. K(+) serves as cofactor.

It is found in the cytoplasm. It carries out the reaction L-methionine + ATP + H2O = S-adenosyl-L-methionine + phosphate + diphosphate. The protein operates within amino-acid biosynthesis; S-adenosyl-L-methionine biosynthesis; S-adenosyl-L-methionine from L-methionine: step 1/1. In terms of biological role, catalyzes the formation of S-adenosylmethionine (AdoMet) from methionine and ATP. The overall synthetic reaction is composed of two sequential steps, AdoMet formation and the subsequent tripolyphosphate hydrolysis which occurs prior to release of AdoMet from the enzyme. The polypeptide is S-adenosylmethionine synthase (Streptococcus agalactiae serotype Ia (strain ATCC 27591 / A909 / CDC SS700)).